The primary structure comprises 384 residues: Carbamoyl phosphate synthase small chain (384 aa).

Positions 1–192 (MMKRIPAILV…LTDNIRVHRV (192 aa)) are CPSase. Serine 51, glycine 244, and glycine 246 together coordinate L-glutamine. Residues 196-382 (KVIVIDFGVK…IEIMTKSKNK (187 aa)) enclose the Glutamine amidotransferase type-1 domain. Residue cysteine 272 is the Nucleophile of the active site. L-glutamine contacts are provided by methionine 273, glutamine 276, asparagine 312, glycine 314, and phenylalanine 315. Active-site residues include histidine 355 and glutamate 357.

This sequence belongs to the CarA family. As to quaternary structure, composed of two chains; the small (or glutamine) chain promotes the hydrolysis of glutamine to ammonia, which is used by the large (or ammonia) chain to synthesize carbamoyl phosphate. Tetramer of heterodimers (alpha,beta)4.

It is found in the plastid. The protein localises to the chloroplast. The catalysed reaction is hydrogencarbonate + L-glutamine + 2 ATP + H2O = carbamoyl phosphate + L-glutamate + 2 ADP + phosphate + 2 H(+). The enzyme catalyses L-glutamine + H2O = L-glutamate + NH4(+). It participates in amino-acid biosynthesis; L-arginine biosynthesis; carbamoyl phosphate from bicarbonate: step 1/1. The protein operates within pyrimidine metabolism; UMP biosynthesis via de novo pathway; (S)-dihydroorotate from bicarbonate: step 1/3. Small subunit of the glutamine-dependent carbamoyl phosphate synthetase (CPSase). CPSase catalyzes the formation of carbamoyl phosphate from the ammonia moiety of glutamine, carbonate, and phosphate donated by ATP, constituting the first step of 2 biosynthetic pathways, one leading to arginine and/or urea and the other to pyrimidine nucleotides. The small subunit (glutamine amidotransferase) binds and cleaves glutamine to supply the large subunit with the substrate ammonia. The protein is Carbamoyl phosphate synthase small chain of Pyropia yezoensis (Susabi-nori).